We begin with the raw amino-acid sequence, 257 residues long: Phosphomannomutase (257 aa).

The active-site Nucleophile is the Asp-19. Mg(2+) is bound by residues Asp-19 and Asp-21. Asp-21 (proton donor/acceptor) is an active-site residue. Arg-28, Arg-133, Arg-144, Arg-151, Ser-189, and Asp-191 together coordinate alpha-D-mannose 1-phosphate. Asp-219, Phe-231, Asp-233, and Thr-236 together coordinate Mg(2+).

The protein belongs to the eukaryotic PMM family. As to quaternary structure, homodimer.

It localises to the cytoplasm. The catalysed reaction is alpha-D-mannose 1-phosphate = D-mannose 6-phosphate. It participates in nucleotide-sugar biosynthesis; GDP-alpha-D-mannose biosynthesis; alpha-D-mannose 1-phosphate from D-fructose 6-phosphate: step 2/2. In terms of biological role, involved in the synthesis of the GDP-mannose and dolichol-phosphate-mannose required for a number of critical mannosyl transfer reactions. This is Phosphomannomutase (pmm1) from Schizosaccharomyces pombe (strain 972 / ATCC 24843) (Fission yeast).